Here is a 354-residue protein sequence, read N- to C-terminus: NADH-quinone oxidoreductase subunit H (354 aa).

The next 10 membrane-spanning stretches (helical) occupy residues 12 to 32 (LLGG…LIAP), 62 to 82 (PWGL…EIIL), 89 to 109 (GLFL…WVVV), 124 to 144 (LLFL…AGWA), 162 to 182 (VSYE…SGTL), 203 to 223 (FLSW…ISGL), 239 to 259 (EIVA…FFLA), 263 to 283 (NMIL…LPPI), 291 to 311 (IPGW…FLWV), and 326 to 346 (LGWK…GLWI).

This sequence belongs to the complex I subunit 1 family. In terms of assembly, NDH-1 is composed of 14 different subunits. Subunits NuoA, H, J, K, L, M, N constitute the membrane sector of the complex.

The protein resides in the cell inner membrane. It carries out the reaction a quinone + NADH + 5 H(+)(in) = a quinol + NAD(+) + 4 H(+)(out). Functionally, NDH-1 shuttles electrons from NADH, via FMN and iron-sulfur (Fe-S) centers, to quinones in the respiratory chain. The immediate electron acceptor for the enzyme in this species is believed to be ubiquinone. Couples the redox reaction to proton translocation (for every two electrons transferred, four hydrogen ions are translocated across the cytoplasmic membrane), and thus conserves the redox energy in a proton gradient. This subunit may bind ubiquinone. In Methylibium petroleiphilum (strain ATCC BAA-1232 / LMG 22953 / PM1), this protein is NADH-quinone oxidoreductase subunit H.